We begin with the raw amino-acid sequence, 406 residues long: Phosphopentomutase (406 aa).

The Mn(2+) site is built by Asp-10, Asp-305, His-310, Asp-346, His-347, and His-358.

The protein belongs to the phosphopentomutase family. Requires Mn(2+) as cofactor.

Its subcellular location is the cytoplasm. The catalysed reaction is 2-deoxy-alpha-D-ribose 1-phosphate = 2-deoxy-D-ribose 5-phosphate. It catalyses the reaction alpha-D-ribose 1-phosphate = D-ribose 5-phosphate. The protein operates within carbohydrate degradation; 2-deoxy-D-ribose 1-phosphate degradation; D-glyceraldehyde 3-phosphate and acetaldehyde from 2-deoxy-alpha-D-ribose 1-phosphate: step 1/2. Isomerase that catalyzes the conversion of deoxy-ribose 1-phosphate (dRib-1-P) and ribose 1-phosphate (Rib-1-P) to deoxy-ribose 5-phosphate (dRib-5-P) and ribose 5-phosphate (Rib-5-P), respectively. This Vibrio cholerae serotype O1 (strain ATCC 39315 / El Tor Inaba N16961) protein is Phosphopentomutase.